The following is a 405-amino-acid chain: L-rhamnonate dehydratase (405 aa).

Substrate is bound by residues His33 and Arg59. Mg(2+) is bound by residues Asp226, Glu252, and Glu280. His329 serves as the catalytic Proton acceptor. Position 349 (Glu349) interacts with substrate.

It belongs to the mandelate racemase/muconate lactonizing enzyme family. RhamD subfamily. Homooctamer; tetramer of dimers. It depends on Mg(2+) as a cofactor.

It catalyses the reaction L-rhamnonate = 2-dehydro-3-deoxy-L-rhamnonate + H2O. Functionally, catalyzes the dehydration of L-rhamnonate to 2-keto-3-deoxy-L-rhamnonate (KDR). In Salmonella paratyphi A (strain AKU_12601), this protein is L-rhamnonate dehydratase.